A 563-amino-acid polypeptide reads, in one-letter code: Sperm-tail PG-rich repeat-containing protein 2 (563 aa).

3 STPGR repeats span residues 21-34 (VGPG…PKQQ), 63-73 (PGPAHYNVSQA), and 97-107 (GPGPASYDCPY). The segment at 131 to 163 (IPSIPSSGKSHGYHLNEDDTIMRRTPPSSDKTM) is disordered. STPGR repeat units follow at residues 200-219 (GPGP…YENI), 250-263 (PGPG…QFDH), 292-321 (TPAP…FGQR), 334-353 (LPGP…QVKK), 423-438 (LPAP…YDMS), 473-483 (GPGPATYNPIL), and 507-518 (SPGPTTYELSPF).

This is Sperm-tail PG-rich repeat-containing protein 2 (Stpg2) from Rattus norvegicus (Rat).